The sequence spans 1353 residues: DNA-directed RNA polymerase subunit beta' (1353 aa).

The interval 1–117 is unknown; that stretch reads MSDNRLFTSV…AFQKLNDLFK (117 aa). The tract at residues 118 to 1353 is DNA-directed RNA polymerase subunit beta'; that stretch reads LYNHFPSISS…SELTKKTNQN (1236 aa). Cys-189, Cys-191, Cys-203, and Cys-206 together coordinate Zn(2+). Positions 578, 580, and 582 each coordinate Mg(2+).

Belongs to the RNA polymerase beta' chain family. The RNAP catalytic core consists of 2 alpha, 1 beta, 1 beta' and 1 omega subunit. When a sigma factor is associated with the core the holoenzyme is formed, which can initiate transcription. Requires Mg(2+) as cofactor. It depends on Zn(2+) as a cofactor.

The enzyme catalyses RNA(n) + a ribonucleoside 5'-triphosphate = RNA(n+1) + diphosphate. Functionally, DNA-dependent RNA polymerase catalyzes the transcription of DNA into RNA using the four ribonucleoside triphosphates as substrates. The chain is DNA-directed RNA polymerase subunit beta' from Aster yellows witches'-broom phytoplasma (strain AYWB).